The following is a 606-amino-acid chain: NADH-ubiquinone oxidoreductase chain 5 (606 aa).

16 helical membrane-spanning segments follow: residues 4-24 (FSSL…SSIL), 38-58 (NIIS…IHSG), 87-107 (MIFV…SLWY), 117-137 (FFKY…ANNL), 140-160 (LFIG…WWYG), 171-191 (AILY…WFLF), 211-233 (LPLL…HPWL), 241-261 (TPVS…FLLI), 273-293 (IQSL…ICAL), 301-320 (IIAF…IGIN), 325-347 (AFLH…GSII), 366-386 (MPFT…MPFL), 413-433 (LIAT…ALLG), 457-477 (LLIG…PTTI), 488-508 (LTAL…SLIT), and 584-604 (IKLY…LFNL).

It belongs to the complex I subunit 5 family. As to quaternary structure, core subunit of respiratory chain NADH dehydrogenase (Complex I) which is composed of 45 different subunits.

The protein localises to the mitochondrion inner membrane. It carries out the reaction a ubiquinone + NADH + 5 H(+)(in) = a ubiquinol + NAD(+) + 4 H(+)(out). In terms of biological role, core subunit of the mitochondrial membrane respiratory chain NADH dehydrogenase (Complex I) which catalyzes electron transfer from NADH through the respiratory chain, using ubiquinone as an electron acceptor. Essential for the catalytic activity and assembly of complex I. The protein is NADH-ubiquinone oxidoreductase chain 5 (MT-ND5) of Equus asinus (Donkey).